Consider the following 385-residue polypeptide: cAMP-dependent protein kinase regulatory subunit (385 aa).

The span at 1–22 (MSSTGFTSPFGNANPFGSSGRS) shows a compositional bias: polar residues. Disordered stretches follow at residues 1-51 (MSST…GVKN) and 77-111 (DFPAHYNLGRRTSVSAESLKPVTDNSDNWSPPVHP). The interval 1–128 (MSSTGFTSPF…RLKKAISGNF (128 aa)) is dimerization and phosphorylation. S89 is modified (phosphoserine). 3',5'-cyclic AMP contacts are provided by residues 129–260 (LFNH…EEVP), E207, R216, 261–378 (ILKT…EAEE), E328, and R337.

The protein belongs to the cAMP-dependent kinase regulatory chain family. As to quaternary structure, tetramer, composed of 2 regulatory (R) and 2 catalytic (C) subunits. In the presence of cAMP it dissociates into 2 active monomeric C subunits and an R dimer.

The sequence is that of cAMP-dependent protein kinase regulatory subunit (mcb) from Neurospora crassa (strain ATCC 24698 / 74-OR23-1A / CBS 708.71 / DSM 1257 / FGSC 987).